Consider the following 424-residue polypeptide: CinA-like protein (424 aa).

This sequence belongs to the CinA family.

The sequence is that of CinA-like protein from Shewanella amazonensis (strain ATCC BAA-1098 / SB2B).